The sequence spans 65 residues: Conotoxin tx3c (65 aa).

The signal sequence occupies residues 1–19 (MFKLGVLLTICLLLFSLNA). A propeptide spanning residues 20-50 (VPLDGDQPADQPAERLLDDISFENNPFYDPA) is cleaved from the precursor. 3 disulfides stabilise this stretch: C53–C64, C54–C60, and C57–C63. At P62 the chain carries 4-hydroxyproline; partial. C64 is modified (cysteine amide).

Post-translationally, the hydroxylation at Pro-62 is observed in PubMed:15924437, PubMed:19380747 and PubMed:22709442, and the non-hydroxylation is described in PubMed:22709442. Expressed by the venom duct.

It localises to the secreted. In terms of biological role, causes scratching in mice. The polypeptide is Conotoxin tx3c (Conus textile (Cloth-of-gold cone)).